The primary structure comprises 357 residues: UDP-N-acetylglucosamine--N-acetylmuramyl-(pentapeptide) pyrophosphoryl-undecaprenol N-acetylglucosamine transferase (357 aa).

UDP-N-acetyl-alpha-D-glucosamine is bound by residues 13-15 (TGG), Asn125, Arg161, Ser189, Ile243, and Gln288.

This sequence belongs to the glycosyltransferase 28 family. MurG subfamily.

It localises to the cell inner membrane. It carries out the reaction di-trans,octa-cis-undecaprenyl diphospho-N-acetyl-alpha-D-muramoyl-L-alanyl-D-glutamyl-meso-2,6-diaminopimeloyl-D-alanyl-D-alanine + UDP-N-acetyl-alpha-D-glucosamine = di-trans,octa-cis-undecaprenyl diphospho-[N-acetyl-alpha-D-glucosaminyl-(1-&gt;4)]-N-acetyl-alpha-D-muramoyl-L-alanyl-D-glutamyl-meso-2,6-diaminopimeloyl-D-alanyl-D-alanine + UDP + H(+). It functions in the pathway cell wall biogenesis; peptidoglycan biosynthesis. Its function is as follows. Cell wall formation. Catalyzes the transfer of a GlcNAc subunit on undecaprenyl-pyrophosphoryl-MurNAc-pentapeptide (lipid intermediate I) to form undecaprenyl-pyrophosphoryl-MurNAc-(pentapeptide)GlcNAc (lipid intermediate II). The protein is UDP-N-acetylglucosamine--N-acetylmuramyl-(pentapeptide) pyrophosphoryl-undecaprenol N-acetylglucosamine transferase of Bordetella parapertussis (strain 12822 / ATCC BAA-587 / NCTC 13253).